A 512-amino-acid chain; its full sequence is GMP synthase [glutamine-hydrolyzing] (512 aa).

One can recognise a Glutamine amidotransferase type-1 domain in the interval 7–197 (TILILDFGGQ…LFEVCDCSAD (191 aa)). The active-site Nucleophile is the C84. Residues H171 and E173 contribute to the active site. Positions 198-387 (WTMDSLIEQT…LGIPDEILYR (190 aa)) constitute a GMPS ATP-PPase domain. Residue 225–231 (SGGVDSA) coordinates ATP.

As to quaternary structure, homodimer.

It catalyses the reaction XMP + L-glutamine + ATP + H2O = GMP + L-glutamate + AMP + diphosphate + 2 H(+). It functions in the pathway purine metabolism; GMP biosynthesis; GMP from XMP (L-Gln route): step 1/1. In terms of biological role, catalyzes the synthesis of GMP from XMP. This is GMP synthase [glutamine-hydrolyzing] from Caldanaerobacter subterraneus subsp. tengcongensis (strain DSM 15242 / JCM 11007 / NBRC 100824 / MB4) (Thermoanaerobacter tengcongensis).